The following is a 527-amino-acid chain: Exodeoxyribonuclease 7 large subunit (527 aa).

A disordered region spans residues 499 to 527 (AGEEGAPPPAAPKKRASRPVVPTKQGSLF).

Belongs to the XseA family. As to quaternary structure, heterooligomer composed of large and small subunits.

It localises to the cytoplasm. It catalyses the reaction Exonucleolytic cleavage in either 5'- to 3'- or 3'- to 5'-direction to yield nucleoside 5'-phosphates.. In terms of biological role, bidirectionally degrades single-stranded DNA into large acid-insoluble oligonucleotides, which are then degraded further into small acid-soluble oligonucleotides. The protein is Exodeoxyribonuclease 7 large subunit of Sinorhizobium fredii (strain NBRC 101917 / NGR234).